We begin with the raw amino-acid sequence, 402 residues long: Tryptophan synthase beta chain (402 aa).

Position 91 is an N6-(pyridoxal phosphate)lysine (lysine 91).

This sequence belongs to the TrpB family. In terms of assembly, tetramer of two alpha and two beta chains. Pyridoxal 5'-phosphate serves as cofactor.

It carries out the reaction (1S,2R)-1-C-(indol-3-yl)glycerol 3-phosphate + L-serine = D-glyceraldehyde 3-phosphate + L-tryptophan + H2O. Its pathway is amino-acid biosynthesis; L-tryptophan biosynthesis; L-tryptophan from chorismate: step 5/5. Its function is as follows. The beta subunit is responsible for the synthesis of L-tryptophan from indole and L-serine. This chain is Tryptophan synthase beta chain, found in Streptococcus thermophilus (strain ATCC BAA-250 / LMG 18311).